Reading from the N-terminus, the 544-residue chain is MTRYIFITGGVVSSLGKGLASAALGALLQARGYKVRLAKLDPYLNVDPGTMSPYQHGEVYVTDDGAETDLDLGHYERFTGVAARRGDNITTGRIYSNVIAKERRGDYLGATVQVIPHVTDQIKDFIGAETTDEDFILCEIGGTVGDIESTPFLEAIRQFGNEVGPENALFIHLTLLPYIPTAGELKTKPTQHSVKELLGMGIQANILLCRADRPIPENERKKIALFCNIRPERVIAALDVDSIYQVPVSYHEEGFDTQVLAYFGLPTEGKPDLSRWTSIVERVRKPQGEVTIAVVGKYTSLLDSYKSLAEALTHGGIANNVKVKLDWIDSEIFEDESAVQRLENVHGILVPGGFGSRGTEGKIRAAQFARERKVPYFGICFGMQMAVIESARNMAGIVDAGSTELGKPGNPVVGLLGLMTEWMRGNSLEKRTEGTDVGGTMRLGTYPAKLVPGSKVAEVYGTTDITERHRHRYEVNVYYKDRLEKVGLLFSGLSPTQLPEIVEIPDHPWFIGVQFHPELKSKPFDPHPLFTSFIKAAIEQSRLV.

The segment at 1–265 (MTRYIFITGG…DTQVLAYFGL (265 aa)) is amidoligase domain. Ser13 is a binding site for CTP. A UTP-binding site is contributed by Ser13. 14-19 (SLGKGL) is an ATP binding site. Residue Tyr54 coordinates L-glutamine. Residue Asp71 participates in ATP binding. The Mg(2+) site is built by Asp71 and Glu139. Residues 146–148 (DIE), 186–191 (KTKPTQ), and Lys222 contribute to the CTP site. Residues 186–191 (KTKPTQ) and Lys222 each bind UTP. Val240 lines the ATP pocket. The Glutamine amidotransferase type-1 domain occupies 291-543 (TIAVVGKYTS…IKAAIEQSRL (253 aa)). Gly353 serves as a coordination point for L-glutamine. Cys380 functions as the Nucleophile; for glutamine hydrolysis in the catalytic mechanism. L-glutamine-binding positions include 381–384 (FGMQ), Glu404, and Arg472. Residues His516 and Glu518 contribute to the active site.

This sequence belongs to the CTP synthase family. Homotetramer.

It carries out the reaction UTP + L-glutamine + ATP + H2O = CTP + L-glutamate + ADP + phosphate + 2 H(+). The catalysed reaction is L-glutamine + H2O = L-glutamate + NH4(+). It catalyses the reaction UTP + NH4(+) + ATP = CTP + ADP + phosphate + 2 H(+). It functions in the pathway pyrimidine metabolism; CTP biosynthesis via de novo pathway; CTP from UDP: step 2/2. Allosterically activated by GTP, when glutamine is the substrate; GTP has no effect on the reaction when ammonia is the substrate. The allosteric effector GTP functions by stabilizing the protein conformation that binds the tetrahedral intermediate(s) formed during glutamine hydrolysis. Inhibited by the product CTP, via allosteric rather than competitive inhibition. In terms of biological role, catalyzes the ATP-dependent amination of UTP to CTP with either L-glutamine or ammonia as the source of nitrogen. Regulates intracellular CTP levels through interactions with the four ribonucleotide triphosphates. The chain is CTP synthase from Azospirillum brasilense.